The following is a 371-amino-acid chain: Putative agmatine deiminase (371 aa).

The active-site Amidino-cysteine intermediate is Cys361.

This sequence belongs to the agmatine deiminase family.

It carries out the reaction agmatine + H2O = N-carbamoylputrescine + NH4(+). The polypeptide is Putative agmatine deiminase (Selenomonas ruminantium).